The following is a 556-amino-acid chain: Cholesterol oxidase (556 aa).

FAD-binding residues include Gly18, Glu37, Gly88, Ala93, and Val235. Catalysis depends on His471, which acts as the Proton acceptor. Gly504 contributes to the FAD binding site.

Belongs to the GMC oxidoreductase family. The cofactor is FAD.

It carries out the reaction cholesterol + O2 = cholest-5-en-3-one + H2O2. It catalyses the reaction cholest-5-en-3-one = cholest-4-en-3-one. The protein operates within steroid metabolism; cholesterol degradation. Functionally, bifunctional enzyme that catalyzes the oxidation and isomerization of cholesterol to cholestenone (cholest-4-en-3-one), an initial step in the cholesterol degradation process. The chain is Cholesterol oxidase from Acinetobacter baumannii.